A 182-amino-acid polypeptide reads, in one-letter code: Adenylate kinase (182 aa).

12–17 provides a ligand contact to ATP; the sequence is GAGKGT. Residues 32–61 are NMP; the sequence is STGDLLRDEVSSGSVLGIKAAEIMNKGELV. AMP contacts are provided by residues T33, R38, 59 to 61, 85 to 88, and Q92; these read ELV and GFPR. The interval 126–132 is LID; sequence ERGRQDD. Residue R127 coordinates ATP. Positions 129 and 140 each coordinate AMP. A168 is an ATP binding site.

This sequence belongs to the adenylate kinase family. As to quaternary structure, monomer.

Its subcellular location is the cytoplasm. The enzyme catalyses AMP + ATP = 2 ADP. It functions in the pathway purine metabolism; AMP biosynthesis via salvage pathway; AMP from ADP: step 1/1. In terms of biological role, catalyzes the reversible transfer of the terminal phosphate group between ATP and AMP. Plays an important role in cellular energy homeostasis and in adenine nucleotide metabolism. This Prochlorococcus marinus (strain NATL2A) protein is Adenylate kinase.